A 277-amino-acid chain; its full sequence is Pantothenate synthetase (277 aa).

An ATP-binding site is contributed by 26-33 (MGNLHAGH). His-33 (proton donor) is an active-site residue. A (R)-pantoate-binding site is contributed by Gln-57. Gln-57 contributes to the beta-alanine binding site. 143 to 146 (GEKD) lines the ATP pocket. (R)-pantoate is bound at residue Gln-149. ATP-binding positions include Val-172 and 180 to 183 (LSSR).

This sequence belongs to the pantothenate synthetase family. As to quaternary structure, homodimer.

It is found in the cytoplasm. The catalysed reaction is (R)-pantoate + beta-alanine + ATP = (R)-pantothenate + AMP + diphosphate + H(+). It functions in the pathway cofactor biosynthesis; (R)-pantothenate biosynthesis; (R)-pantothenate from (R)-pantoate and beta-alanine: step 1/1. In terms of biological role, catalyzes the condensation of pantoate with beta-alanine in an ATP-dependent reaction via a pantoyl-adenylate intermediate. This Nitrosomonas europaea (strain ATCC 19718 / CIP 103999 / KCTC 2705 / NBRC 14298) protein is Pantothenate synthetase.